The sequence spans 210 residues: Fimbriae Z protein (210 aa).

Positions 5-121 (SVIIMDEHPI…DIYNAVKMIL (117 aa)) constitute a Response regulatory domain. D56 carries the 4-aspartylphosphate modification. Residues 143–208 (GGHHDMPLSN…ELIDYAKSHE (66 aa)) enclose the HTH luxR-type domain. Residues 167–186 (NKEIAEQLLLSNKTISAHKA) constitute a DNA-binding region (H-T-H motif).

The protein localises to the cytoplasm. The polypeptide is Fimbriae Z protein (fimZ) (Salmonella typhimurium (strain LT2 / SGSC1412 / ATCC 700720)).